Here is a 348-residue protein sequence, read N- to C-terminus: Guanosine ABC transporter permease protein NupP (348 aa).

9 helical membrane-spanning segments follow: residues 8 to 28 (LLVPLIAIILGLAAGALIMLV), 61 to 81 (YILSGLAVAFAFRTGLFNIGV), 85 to 105 (LLVGWTAAVWVGTAFDGPAYI), 107 to 127 (LPLALITAAAAGGLWGFIPGI), 136 to 156 (EVIVTIMMNYIALHMTNYIIS), 189 to 209 (LHLGIIVALLAAVIMWFIINK), 237 to 257 (IMTSMLISGAFAGLAGAMEGL), 277 to 297 (IAVALLGGNTAVGVVLAACLL), and 320 to 340 (IVIAIIILFVASSYAIRFVMG).

It belongs to the binding-protein-dependent transport system permease family. In terms of assembly, the complex is composed of two ATP-binding proteins (NupO), two transmembrane proteins (NupP and NupQ) and a solute-binding protein (NupN).

It is found in the cell membrane. Functionally, part of an ABC transporter complex involved in the uptake of guanosine. Responsible for the translocation of the substrate across the membrane. May be a nucleoside transporter of broad specificity but with various affinities for different substrates. This Bacillus subtilis (strain 168) protein is Guanosine ABC transporter permease protein NupP.